Reading from the N-terminus, the 313-residue chain is Methionyl-tRNA formyltransferase (313 aa).

(6S)-5,6,7,8-tetrahydrofolate is bound at residue 110 to 113 (SLLP).

This sequence belongs to the Fmt family.

The enzyme catalyses L-methionyl-tRNA(fMet) + (6R)-10-formyltetrahydrofolate = N-formyl-L-methionyl-tRNA(fMet) + (6S)-5,6,7,8-tetrahydrofolate + H(+). In terms of biological role, attaches a formyl group to the free amino group of methionyl-tRNA(fMet). The formyl group appears to play a dual role in the initiator identity of N-formylmethionyl-tRNA by promoting its recognition by IF2 and preventing the misappropriation of this tRNA by the elongation apparatus. In Enterococcus faecalis (strain ATCC 700802 / V583), this protein is Methionyl-tRNA formyltransferase.